The following is a 321-amino-acid chain: Necdin (321 aa).

Residues 1-96 (MSEQSKDLSD…QPGPAPPAPA (96 aa)) are disordered. Residues 20-35 (SEVHSSPGVSEGVPPS) are compositionally biased toward low complexity. The MAGE domain maps to 98-297 (LVQKAHELMW…QAWPSRYREA (200 aa)).

As to quaternary structure, binds to the transactivation domains of E2F1 and p53. Binds also SV40 large T antigen and adenovirus E1A. Interacts with nucleobindin 1 and 2. As to expression, almost ubiquitous. Detected in fetal brain, lung, liver and kidney; in adult heart, brain, placenta, lung, liver, skeletal muscle, kidney, pancreas, spleen, thymus, prostate, testis, ovary, small intestine and colon. Not detected in peripheral blood leukocytes. In brain, restricted to post-mitotic neurons.

Its subcellular location is the perikaryon. The protein localises to the nucleus. Growth suppressor that facilitates the entry of the cell into cell cycle arrest. Functionally similar to the retinoblastoma protein it binds to and represses the activity of cell-cycle-promoting proteins such as SV40 large T antigen, adenovirus E1A, and the transcription factor E2F. Necdin also interacts with p53 and works in an additive manner to inhibit cell growth. Also functions as a transcription factor and directly binds to specific guanosine-rich DNA sequences. This chain is Necdin (NDN), found in Homo sapiens (Human).